Here is a 280-residue protein sequence, read N- to C-terminus: Shikimate dehydrogenase (NADP(+)) (280 aa).

Shikimate-binding positions include 15–17 and T62; that span reads SLS. Residue K66 is the Proton acceptor of the active site. Shikimate contacts are provided by N88 and D104. Residues 128–132, 151–156, and I222 each bind NADP(+); these read GAGGA and NRTEER. Y224 provides a ligand contact to shikimate. G245 is a binding site for NADP(+).

This sequence belongs to the shikimate dehydrogenase family. In terms of assembly, homodimer.

It carries out the reaction shikimate + NADP(+) = 3-dehydroshikimate + NADPH + H(+). Its pathway is metabolic intermediate biosynthesis; chorismate biosynthesis; chorismate from D-erythrose 4-phosphate and phosphoenolpyruvate: step 4/7. Its function is as follows. Involved in the biosynthesis of the chorismate, which leads to the biosynthesis of aromatic amino acids. Catalyzes the reversible NADPH linked reduction of 3-dehydroshikimate (DHSA) to yield shikimate (SA). The polypeptide is Shikimate dehydrogenase (NADP(+)) (Methanosarcina mazei (strain ATCC BAA-159 / DSM 3647 / Goe1 / Go1 / JCM 11833 / OCM 88) (Methanosarcina frisia)).